Reading from the N-terminus, the 1442-residue chain is Cleavage and polyadenylation specificity factor subunit 1 (1442 aa).

Belongs to the CPSF1 family. Component of the CPSF complex, at least composed of CPSF160, CPSF100, CPSF73-I, CPSF73-II, CPSF30, FY and FIPS5. Forms a complex with cleavage and polyadenylation specificity factor (CPSF) subunits FY, CPSF30, CPSF73-I, CPSF 73-II and CPSF100.

The protein localises to the nucleus. Functionally, CPSF plays a key role in pre-mRNA 3'-end formation, recognizing the AAUAAA signal sequence and interacting with poly(A)polymerase and other factors to bring about cleavage and poly(A) addition. This subunit is involved in the RNA recognition step of the polyadenylation reaction. This Arabidopsis thaliana (Mouse-ear cress) protein is Cleavage and polyadenylation specificity factor subunit 1 (CPSF160).